Consider the following 1914-residue polypeptide: Myosin light chain kinase, smooth muscle (1914 aa).

At glycine 2 the chain carries N-acetylalanine. Ig-like C2-type domains are found at residues 33 to 122 and 161 to 249; these read PAFI…VELT and PKFA…AELS. Residues cysteine 182 and cysteine 233 are joined by a disulfide bond. Tyrosine 231 carries the phosphotyrosine; by ABL1 modification. The tract at residues 286 to 393 is disordered; sequence DSLEAAAKSK…TRQPGLGSQD (108 aa). Serine 305 carries the post-translational modification Phosphoserine. Positions 318–329 are enriched in basic and acidic residues; that stretch reads RESKLESCKDSP. The span at 331–347 shows a compositional bias: polar residues; that stretch reads TAPQTPVLQKTSSSITL. Serine 343 and serine 365 each carry phosphoserine. 2 Ig-like C2-type domains span residues 414–503 and 514–599; these read PKFE…WTLQ and PSFS…AWVT. Intrachain disulfides connect cysteine 435–cysteine 487 and cysteine 535–cysteine 583. At tyrosine 464 the chain carries Phosphotyrosine; by ABL1 and SRC. A Phosphotyrosine; by SRC modification is found at tyrosine 471. Tyrosine 556 is subject to Phosphotyrosine; by ABL1. The residue at position 608 (lysine 608) is an N6-acetyllysine. At tyrosine 611 the chain carries Phosphotyrosine; by ABL1. Ig-like C2-type domains are found at residues 620–711 and 721–821; these read PTAP…AVLT and PWFI…ALPR. A disulfide bond links cysteine 742 and cysteine 805. Residues tyrosine 792 and tyrosine 846 each carry the phosphotyrosine; by ABL1 modification. Tandem repeats lie at residues 868 to 895, 896 to 923, 924 to 951, and 952 to 979. The interval 868 to 998 is 5 X 28 AA approximate tandem repeats; the sequence is DVRGVLKRRV…KKLPAENGSS (131 aa). The actin-binding (calcium/calmodulin-sensitive) stretch occupies residues 923–963; sequence MDFRANLQRQVKPKTVSEEERKVHSPQQVDFRSVLAKKGTS. Residues 932-1098 form a disordered region; it reads QVKPKTVSEE…KRSESQGTAP (167 aa). Position 947 is a phosphoserine (serine 947). The calmodulin-binding stretch occupies residues 948–963; that stretch reads PQQVDFRSVLAKKGTS. The 1-5; truncated repeat unit spans residues 980–998; it reads DFRSVLGGKKKLPAENGSS. One copy of the 2-1; truncated repeat lies at 999–1003; that stretch reads SAETL. The segment at 999 to 1063 is 6 X 12 AA approximate tandem repeats; it reads SAETLNAKAV…KPDENLKSAS (65 aa). 5 repeat units span residues 1004-1015, 1016-1027, 1028-1039, 1040-1051, and 1052-1063. The segment covering 1054–1077 has biased composition (basic and acidic residues); the sequence is KPDENLKSASKEELKKDVKNDVNC. Residues 1061–1460 form an actin-binding (calcium/calmodulin-insensitive) region; sequence SASKEELKKD…TVTINTEQKV (400 aa). The Ig-like C2-type 7 domain maps to 1098 to 1186; the sequence is PAFKQKLQDV…GQAECSCQVT (89 aa). Cysteine 1119 and cysteine 1170 are disulfide-bonded. A disordered region spans residues 1192–1237; sequence ASENTKAPEMKSRRPKSSLPPVLGTESDATVKKKPAPKTPPKAAMP. One can recognise an Ig-like C2-type 8 domain in the interval 1238 to 1326; that stretch reads PQIIQFPEDQ…GSRQAQVNLT (89 aa). Residues 1334-1426 form the Fibronectin type-III domain; that stretch reads PAGTPCASDI…QESELTTVGE (93 aa). The segment covering 1413–1422 has biased composition (polar residues); that stretch reads SEPSQESELT. Residues 1413 to 1446 form a disordered region; it reads SEPSQESELTTVGEKPEEPKDEVEVSDDDEKEPE. Residues 1431–1445 are compositionally biased toward acidic residues; it reads PKDEVEVSDDDEKEP. Serine 1438 bears the Phosphoserine mark. Tyrosine 1449 carries the post-translational modification Phosphotyrosine; by ABL1. Residues 1464-1719 form the Protein kinase domain; sequence YDIEERLGSG…CTQCLQHPWL (256 aa). Residues 1470 to 1478 and lysine 1493 contribute to the ATP site; that span reads LGSGKFGQV. Phosphotyrosine; by ABL1 is present on tyrosine 1575. Aspartate 1585 serves as the catalytic Proton acceptor. At tyrosine 1635 the chain carries Phosphotyrosine; by ABL1. Positions 1711–1774 are calmodulin-binding; sequence TQCLQHPWLM…SGLSGRKSST (64 aa). Phosphoserine occurs at positions 1759, 1760, 1772, 1773, and 1776. A disordered region spans residues 1767–1787; it reads LSGRKSSTGSPTSPLNAEKLE. Residues 1770 to 1781 show a composition bias toward polar residues; it reads RKSSTGSPTSPL. The residue at position 1778 (threonine 1778) is a Phosphothreonine. Serine 1779 is subject to Phosphoserine. In terms of domain architecture, Ig-like C2-type 9 spans 1809-1898; it reads PYFSKTIRDL…GEATCTAELI (90 aa). Cysteines 1830 and 1882 form a disulfide.

It belongs to the protein kinase superfamily. CAMK Ser/Thr protein kinase family. In terms of assembly, all isoforms including Telokin bind calmodulin. Interacts with SVIL. Interacts with CTTN; this interaction is reduced during thrombin-induced endothelial cell (EC) contraction but is promoted by the barrier-protective agonist sphingosine 1-phosphate (S1P) within lamellipodia. A complex made of ABL1, CTTN and MYLK regulates cortical actin-based cytoskeletal rearrangement critical to sphingosine 1-phosphate (S1P)-mediated endothelial cell (EC) barrier enhancement. Binds to NAA10/ARD1 and PTK2B/PYK2. Mg(2+) serves as cofactor. Ca(2+) is required as a cofactor. Post-translationally, can probably be down-regulated by phosphorylation. Tyrosine phosphorylation by ABL1 increases kinase activity, reverses MLCK-mediated inhibition of Arp2/3-mediated actin polymerization, and enhances CTTN-binding. Phosphorylation by SRC at Tyr-464 and Tyr-471 promotes CTTN binding. In terms of processing, the C-terminus is deglutamylated by AGTPBP1/CCP1, AGBL1/CCP4 and AGBL4/CCP6, leading to the formation of Myosin light chain kinase, smooth muscle, deglutamylated form. The consequences of C-terminal deglutamylation are unknown. Acetylated at Lys-608 by NAA10/ARD1 via a calcium-dependent signaling; this acetylation represses kinase activity and reduces tumor cell migration. As to expression, smooth muscle and non-muscle isozymes are expressed in a wide variety of adult and fetal tissues and in cultured endothelium with qualitative expression appearing to be neither tissue- nor development-specific. Non-muscle isoform 2 is the dominant splice variant expressed in various tissues. Telokin has been found in a wide variety of adult and fetal tissues. Accumulates in well differentiated enterocytes of the intestinal epithelium in response to tumor necrosis factor (TNF).

The protein resides in the cytoplasm. The protein localises to the cell projection. Its subcellular location is the lamellipodium. It localises to the cleavage furrow. It is found in the cytoskeleton. The protein resides in the stress fiber. It carries out the reaction L-seryl-[myosin light chain] + ATP = O-phospho-L-seryl-[myosin light chain] + ADP + H(+). It catalyses the reaction L-threonyl-[myosin light chain] + ATP = O-phospho-L-threonyl-[myosin light chain] + ADP + H(+). Isoform 1 is activated by phosphorylation on Tyr-464 and Tyr-471. Isoforms which lack these tyrosine residues are not regulated in this way. All catalytically active isoforms require binding to calcium and calmodulin for activation. Repressed by organometallic pyridylnaphthalimide complexes, wortmannin, ML-7 (a synthetic naphthalenesulphonyl derivative that inhibits the binding of ATP to MLCK) and ML-9. In terms of biological role, calcium/calmodulin-dependent myosin light chain kinase implicated in smooth muscle contraction via phosphorylation of myosin light chains (MLC). Also regulates actin-myosin interaction through a non-kinase activity. Phosphorylates PTK2B/PYK2 and myosin light-chains. Involved in the inflammatory response (e.g. apoptosis, vascular permeability, leukocyte diapedesis), cell motility and morphology, airway hyperreactivity and other activities relevant to asthma. Required for tonic airway smooth muscle contraction that is necessary for physiological and asthmatic airway resistance. Necessary for gastrointestinal motility. Implicated in the regulation of endothelial as well as vascular permeability, probably via the regulation of cytoskeletal rearrangements. In the nervous system it has been shown to control the growth initiation of astrocytic processes in culture and to participate in transmitter release at synapses formed between cultured sympathetic ganglion cells. Critical participant in signaling sequences that result in fibroblast apoptosis. Plays a role in the regulation of epithelial cell survival. Required for epithelial wound healing, especially during actomyosin ring contraction during purse-string wound closure. Mediates RhoA-dependent membrane blebbing. Triggers TRPC5 channel activity in a calcium-dependent signaling, by inducing its subcellular localization at the plasma membrane. Promotes cell migration (including tumor cells) and tumor metastasis. PTK2B/PYK2 activation by phosphorylation mediates ITGB2 activation and is thus essential to trigger neutrophil transmigration during acute lung injury (ALI). May regulate optic nerve head astrocyte migration. Probably involved in mitotic cytoskeletal regulation. Regulates tight junction probably by modulating ZO-1 exchange in the perijunctional actomyosin ring. Mediates burn-induced microvascular barrier injury; triggers endothelial contraction in the development of microvascular hyperpermeability by phosphorylating MLC. Essential for intestinal barrier dysfunction. Mediates Giardia spp.-mediated reduced epithelial barrier function during giardiasis intestinal infection via reorganization of cytoskeletal F-actin and tight junctional ZO-1. Necessary for hypotonicity-induced Ca(2+) entry and subsequent activation of volume-sensitive organic osmolyte/anion channels (VSOAC) in cervical cancer cells. Responsible for high proliferative ability of breast cancer cells through anti-apoptosis. This is Myosin light chain kinase, smooth muscle from Homo sapiens (Human).